We begin with the raw amino-acid sequence, 128 residues long: MAFSGKYEFESEKNYDEFMKRLGLPGDVIERGRNFKIITEVQQDGQDFTWSQSYSGGNIMSNKFTIGKECEMQTMGGKKFKATVKMEGGKVVAEFPNYHQTSEVVGDKLVEISTIGDVTYERVSKRLA.

Ala-2 bears the N-acetylalanine mark.

The protein belongs to the calycin superfamily. Fatty-acid binding protein (FABP) family. Expressed in ovary granulosa and luteal cells.

The protein resides in the cytoplasm. It localises to the membrane. In terms of biological role, binds to bile acids and is involved in enterohepatic bile acid metabolism. Required for efficient apical to basolateral transport of conjugated bile acids in ileal enterocytes. Stimulates gastric acid and pepsinogen secretion. The protein is Gastrotropin (Fabp6) of Mus musculus (Mouse).